We begin with the raw amino-acid sequence, 238 residues long: Purine nucleoside phosphorylase DeoD-type (238 aa).

Histidine 4 is a binding site for a purine D-ribonucleoside. Phosphate is bound by residues glycine 20, arginine 24, arginine 43, and 87–90; that span reads RVGS. Residues 179–181 and 203–204 contribute to the a purine D-ribonucleoside site; these read EME and SD. Catalysis depends on aspartate 204, which acts as the Proton donor.

Belongs to the PNP/UDP phosphorylase family. Homohexamer; trimer of homodimers.

The enzyme catalyses a purine D-ribonucleoside + phosphate = a purine nucleobase + alpha-D-ribose 1-phosphate. The catalysed reaction is a purine 2'-deoxy-D-ribonucleoside + phosphate = a purine nucleobase + 2-deoxy-alpha-D-ribose 1-phosphate. Its function is as follows. Catalyzes the reversible phosphorolytic breakdown of the N-glycosidic bond in the beta-(deoxy)ribonucleoside molecules, with the formation of the corresponding free purine bases and pentose-1-phosphate. The polypeptide is Purine nucleoside phosphorylase DeoD-type (Actinobacillus succinogenes (strain ATCC 55618 / DSM 22257 / CCUG 43843 / 130Z)).